Consider the following 509-residue polypeptide: Maturase K (509 aa).

The protein belongs to the intron maturase 2 family. MatK subfamily.

The protein localises to the plastid. Its subcellular location is the chloroplast. Its function is as follows. Usually encoded in the trnK tRNA gene intron. Probably assists in splicing its own and other chloroplast group II introns. The protein is Maturase K of Clematis florida (Asian virgin's bower).